A 179-amino-acid polypeptide reads, in one-letter code: ATP-dependent protease subunit HslV (179 aa).

Residue Thr7 is part of the active site. Na(+) contacts are provided by Gly162, Cys165, and Thr168.

The protein belongs to the peptidase T1B family. HslV subfamily. In terms of assembly, a double ring-shaped homohexamer of HslV is capped on each side by a ring-shaped HslU homohexamer. The assembly of the HslU/HslV complex is dependent on binding of ATP.

It localises to the cytoplasm. It carries out the reaction ATP-dependent cleavage of peptide bonds with broad specificity.. Allosterically activated by HslU binding. Its function is as follows. Protease subunit of a proteasome-like degradation complex believed to be a general protein degrading machinery. This is ATP-dependent protease subunit HslV from Aromatoleum aromaticum (strain DSM 19018 / LMG 30748 / EbN1) (Azoarcus sp. (strain EbN1)).